The following is a 125-amino-acid chain: Fluoride-specific ion channel FluC (125 aa).

The next 4 helical transmembrane spans lie at 1–21 (MIQAFLVALGGAIGSVLRYYV), 32–52 (AFPWGTLAVNVVGCFVIGVFA), 68–88 (LLITGFLGGFTTFSAFSLDAI), and 101–121 (IYIAASVGLSMAAVISGLAVM). Residues Gly-75 and Thr-78 each coordinate Na(+).

Belongs to the fluoride channel Fluc/FEX (TC 1.A.43) family.

The protein localises to the cell inner membrane. The catalysed reaction is fluoride(in) = fluoride(out). Its activity is regulated as follows. Na(+) is not transported, but it plays an essential structural role and its presence is essential for fluoride channel function. In terms of biological role, fluoride-specific ion channel. Important for reducing fluoride concentration in the cell, thus reducing its toxicity. The polypeptide is Fluoride-specific ion channel FluC (Rhizobium etli (strain CIAT 652)).